Reading from the N-terminus, the 464-residue chain is Mannose-1-phosphate guanylyltransferase (464 aa).

The protein belongs to the mannose-6-phosphate isomerase type 2 family.

It catalyses the reaction alpha-D-mannose 1-phosphate + GTP + H(+) = GDP-alpha-D-mannose + diphosphate. The protein operates within nucleotide-sugar biosynthesis; GDP-alpha-D-mannose biosynthesis; GDP-alpha-D-mannose from alpha-D-mannose 1-phosphate (GTP route): step 1/1. It functions in the pathway bacterial outer membrane biogenesis; LPS O-antigen biosynthesis. In terms of biological role, involved in GDP-mannose biosynthesis which serves as the activated sugar nucleotide precursor for mannose residues in cell surface polysaccharides. This enzyme participates in synthesis of the LPS O7 antigen. The protein is Mannose-1-phosphate guanylyltransferase (manC) of Escherichia coli.